We begin with the raw amino-acid sequence, 336 residues long: Potassium channel subfamily K member 1 (336 aa).

Residues 1 to 20 are Cytoplasmic-facing; the sequence is MLQSLAGSSCVRLVERHRSA. A helical transmembrane segment spans residues 21 to 41; sequence WCFGFLVLGYLLYLVFGAVVF. Residues 42-103 lie on the Extracellular side of the membrane; the sequence is SSVELPYEDL…SNASGNWNWD (62 aa). A glycan (N-linked (GlcNAc...) asparagine) is linked at Asn-95. Residues 104–116 constitute an intramembrane region (helical); the sequence is FTSALFFASTVLS. The stretch at 117–122 is an intramembrane region; that stretch reads TTGYGH. The interval 117–122 is selectivity filter 1; it reads TTGYGH. Over 123-132 the chain is Extracellular; sequence TVPLSDGGKA. A helical membrane pass occupies residues 133-156; it reads FCIIYSVIGIPFTLLFLTAVVQRV. Topologically, residues 157-181 are cytoplasmic; sequence TIHVTRRPVLYFHVRWGFSKQAVAI. A helical membrane pass occupies residues 182–202; sequence VHAVLLGVVTVSCFFFIPAAV. Residues 203–211 lie on the Extracellular side of the membrane; it reads FSVLEDDWN. An intramembrane region (helical) is located at residues 212-224; that stretch reads FLESFYFCFISLS. The tract at residues 225 to 230 is selectivity filter 2; it reads TIGLGD. Residues 225–231 lie within the membrane without spanning it; sequence TIGLGDY. Residues 232 to 243 lie on the Extracellular side of the membrane; that stretch reads VPGEGYNQKFRE. A helical transmembrane segment spans residues 244–267; the sequence is LYKIGITCYLLLGLIAMLVVLETF. Over 268–336 the chain is Cytoplasmic; that stretch reads CELHELKKFR…PALADGASDH (69 aa). Lys-274 is covalently cross-linked (Glycyl lysine isopeptide (Lys-Gly) (interchain with G-Cter in SUMO)). The segment at 293–299 is important for intracellular retention in recycling endosomes; sequence IIEHDQL. The segment at 307-336 is disordered; sequence QAAGVQEDQKQNEPFVSPQPPALADGASDH.

Belongs to the two pore domain potassium channel (TC 1.A.1.8) family. In terms of assembly, homodimer; disulfide-linked. Heterodimer with KCNK2; disulfide-linked. In astrocytes, forms mostly heterodimeric potassium channels with KCNK2, with only a minor proportion of functional channels containing homodimeric KCNK1. Interacts with KCNK3 and KCNK9, forming functional heterodimeric channels. Interacts with GNG4. Identified in a complex with PSD and ARF6; interacts only with PSD that is bound to ARF6. Interacts with UBE2I. Post-translationally, sumoylation is controversial. Sumoylated by UBE2I. Not sumoylated when expressed in xenopus oocytes or mammalian cells. Sumoylation inactivates the channel, but does not interfere with expression at the cell membrane. Sumoylation of a single subunit is sufficient to silence the dimeric channel. Sumoylation of KCNK1 is sufficient to silence heterodimeric channels formed by KCNK1 and KCNK3 or KCNK9. Desumoylated by SENP1; this activates the channel. Desumoylated by SENP1; this strongly increases halothane-mediated activation of heterodimeric channels formed with KCNK9. SENP1 treatment has no effect.

The protein resides in the cell membrane. The protein localises to the recycling endosome. It is found in the synaptic cell membrane. Its subcellular location is the cytoplasmic vesicle. It localises to the perikaryon. The protein resides in the cell projection. The protein localises to the dendrite. It is found in the apical cell membrane. The enzyme catalyses K(+)(in) = K(+)(out). It carries out the reaction NH4(+)(in) = NH4(+)(out). It catalyses the reaction Na(+)(in) = Na(+)(out). The catalysed reaction is Rb(+)(in) = Rb(+)(out). The enzyme catalyses Cs(+)(in) = Cs(+)(out). It carries out the reaction Li(+)(in) = Li(+)(out). It catalyses the reaction L-glutamate(out) = L-glutamate(in). The catalysed reaction is chloride(in) = chloride(out). Functionally, ion channel that contributes to passive transmembrane potassium transport and to the regulation of the resting membrane potential in brain astrocytes, but also in kidney and in other tissues. Forms dimeric channels through which potassium ions pass in accordance with their electrochemical gradient. The channel is selective for K(+) ions at physiological potassium concentrations and at neutral pH, but becomes permeable to Na(+) at subphysiological K(+) levels and upon acidification of the extracellular medium. The homodimer has very low potassium channel activity, when expressed in heterologous systems, and can function as weakly inward rectifying potassium channel. Channel activity is modulated by activation of serotonin receptors. Heterodimeric channels containing KCNK1 and KCNK2 have much higher activity, and may represent the predominant form in astrocytes. Heterodimeric channels containing KCNK1 and KCNK3 or KCNK9 have much higher activity. Heterodimeric channels formed by KCNK1 and KCNK9 may contribute to halothane-sensitive currents. Mediates outward rectifying potassium currents in dentate gyrus granule cells and contributes to the regulation of their resting membrane potential. Contributes to the regulation of action potential firing in dentate gyrus granule cells and down-regulates their intrinsic excitability. In astrocytes, the heterodimer formed by KCNK1 and KCNK2 is required for rapid glutamate release in response to activation of G-protein coupled receptors, such as F2R and CNR1. Required for normal ion and water transport in the kidney. Contributes to the regulation of the resting membrane potential of pancreatic beta cells. The low channel activity of homodimeric KCNK1 may be due to sumoylation. The low channel activity may be due to rapid internalization from the cell membrane and retention in recycling endosomes. Permeable to monovalent cations with ion selectivity for K(+) &gt; Rb(+) &gt;&gt; NH4(+) &gt;&gt; Cs(+) = Na(+) = Li(+). The protein is Potassium channel subfamily K member 1 of Bos taurus (Bovine).